A 468-amino-acid polypeptide reads, in one-letter code: 6-phospho-beta-galactosidase (468 aa).

D-galactose 6-phosphate is bound by residues Gln19, His116, Asn159, Glu160, and Asn297. Catalysis depends on Glu160, which acts as the Proton donor. Catalysis depends on Glu375, which acts as the Nucleophile. D-galactose 6-phosphate is bound by residues Ser428, Trp429, Lys435, and Tyr437.

The protein belongs to the glycosyl hydrolase 1 family.

It catalyses the reaction a 6-phospho-beta-D-galactoside + H2O = D-galactose 6-phosphate + an alcohol. It participates in carbohydrate metabolism; lactose degradation; D-galactose 6-phosphate and beta-D-glucose from lactose 6-phosphate: step 1/1. The chain is 6-phospho-beta-galactosidase from Streptococcus pneumoniae (strain JJA).